A 1360-amino-acid polypeptide reads, in one-letter code: Activating molecule in BECN1-regulated autophagy protein 1B (1360 aa).

WD repeat units follow at residues 50-89 (DNPR…CLHS), 92-132 (GHRR…ESWF), and 134-174 (ESNV…AVVK). Over residues 249–258 (RSSGAQANDQ) the composition is skewed to polar residues. Disordered stretches follow at residues 249–277 (RSSG…FQYP), 315–364 (PTGL…NSAH), 412–490 (GVET…QRNN), 514–573 (ELER…RCRS), 587–616 (WERS…EDPG), 664–688 (PTVS…NPDE), and 754–796 (TLSN…MPRN). The span at 319–333 (QPSDSTQPQTQSGPS) shows a compositional bias: low complexity. Residues 350-361 (AFSSVFSGTAGN) are compositionally biased toward polar residues. The span at 428–437 (SSSSMDLLSL) shows a compositional bias: low complexity. Composition is skewed to polar residues over residues 443-454 (GSSSSPIYTSAT) and 473-490 (DGTS…QRNN). The span at 590–607 (SGQTSSSSSSQEGPSWPL) shows a compositional bias: low complexity. The span at 754–768 (TLSNSQADSQSNNPS) shows a compositional bias: polar residues. The span at 775 to 784 (SDGDYEDIEE) shows a compositional bias: acidic residues. 2 consecutive short sequence motifs (TQT motif) follow at residues 1109 to 1111 (TQT) and 1121 to 1123 (TQT). 2 disordered regions span residues 1120-1142 (ETQT…TSRH) and 1241-1360 (SQTS…LYGR). Composition is skewed to polar residues over residues 1129-1142 (SAST…TSRH) and 1241-1252 (SQTSVRTAQGGN). The span at 1278-1288 (APGPSGSSGAP) shows a compositional bias: low complexity. Residues 1311-1321 (FGDRQPDDVQR) are compositionally biased toward basic and acidic residues. Over residues 1329-1347 (NMSNHSNNNNNDHSNSYSE) the composition is skewed to low complexity. The span at 1348 to 1360 (SRSRDYPDDLYGR) shows a compositional bias: basic and acidic residues.

Belongs to the WD repeat AMBRA1 family. In terms of assembly, component of the DCX(AMBRA1) E3 ubiquitin ligase complex.

The protein localises to the endoplasmic reticulum. It localises to the cytoplasm. Its subcellular location is the cytoskeleton. The protein resides in the cytoplasmic vesicle. It is found in the autophagosome. The protein localises to the mitochondrion. It localises to the cytosol. Its subcellular location is the nucleus. The protein resides in the cell junction. It is found in the focal adhesion. It functions in the pathway protein modification; protein ubiquitination. Substrate-recognition component of a DCX (DDB1-CUL4-X-box) E3 ubiquitin-protein ligase complex involved in cell cycle control and autophagy. The DCX(AMBRA1) complex specifically mediates the polyubiquitination of target proteins. Acts as an upstream master regulator of the transition from G1 to S cell phase: ambra1b specifically recognizes and binds phosphorylated cyclin-D (ccnd1, ccnd2 and ccnd3), leading to cyclin-D ubiquitination by the DCX(AMBRA1) complex and subsequent degradation. Acts as a regulator of Cul5-RING (CRL5) E3 ubiquitin-protein ligase complexes by mediating ubiquitination and degradation of Elongin-C (eloc) component of CRL5 complexes. Acts as a key regulator of autophagy by modulating the BECN1-PIK3C3 complex: controls protein turnover during neuronal development, and regulates normal cell survival and proliferation. In normal conditions, ambra1b is tethered to the cytoskeleton via interaction with dyneins light chains. Upon autophagy induction, ambra1b is released from the cytoskeletal docking site to induce autophagosome nucleation by mediating ubiquitination of proteins involved in autophagy. Also acts as an activator of mitophagy. Required for skeletal muscle development. This chain is Activating molecule in BECN1-regulated autophagy protein 1B, found in Danio rerio (Zebrafish).